The chain runs to 518 residues: E3 ubiquitin-protein ligase TRIM39 (518 aa).

Residues 29–70 (CSVCLEYLKEPVIIECGHNFCKACITRWWEDLERDFPCPVCR) form an RING-type zinc finger. A B box-type zinc finger spans residues 102 to 143 (RDESLCPQHHEALSLFCYEDQEAVCLICAISHTHRAHTVVPL). The Zn(2+) site is built by cysteine 107, histidine 110, cysteine 129, and histidine 135. A coiled-coil region spans residues 181–250 (ELKRLVESRR…AHLAAEVEGK (70 aa)). Interaction with CDKN1A regions lie at residues 268–337 (KNIP…QLIA) and 389–518 (TSGR…TDWE). In terms of domain architecture, B30.2/SPRY spans 319–514 (SNFPRQYFAL…NAAPLTIRPP (196 aa)).

The protein belongs to the TRIM/RBCC family. In terms of assembly, isoform 1 interacts with MOAP1. Isoform 1 and isoform 2 interact with CDKN1A. Isoform 2 interacts (via domain B box-type) with CACTIN. Post-translationally, autoubiquitinated. In terms of tissue distribution, ubiquitous; highly expressed in brain, heart, kidney, liver, skeletal muscle, spleen and testis.

It localises to the cytoplasm. The protein localises to the cytosol. Its subcellular location is the mitochondrion. It is found in the nucleus. The enzyme catalyses S-ubiquitinyl-[E2 ubiquitin-conjugating enzyme]-L-cysteine + [acceptor protein]-L-lysine = [E2 ubiquitin-conjugating enzyme]-L-cysteine + N(6)-ubiquitinyl-[acceptor protein]-L-lysine.. Its pathway is protein modification; protein ubiquitination. In terms of biological role, E3 ubiquitin-protein ligase. May facilitate apoptosis by inhibiting APC/C-Cdh1-mediated poly-ubiquitination and subsequent proteasome-mediated degradation of the pro-apoptotic protein MOAP1. Regulates the G1/S transition of the cell cycle and DNA damage-induced G2 arrest by stabilizing CDKN1A/p21. Positively regulates CDKN1A/p21 stability by competing with DTL for CDKN1A/p21 binding, therefore disrupting DCX(DTL) E3 ubiquitin ligase complex-mediated CDKN1A/p21 ubiquitination and degradation. Functionally, regulates the G1/S transition of the cell cycle and DNA damage-induced G2 arrest by stabilizing CDKN1A/p21. Positively regulates CDKN1A/p21 stability by competing with DTL for CDKN1A/p21 binding, therefore disrupting DCX(DTL) E3 ubiquitin ligase complex-mediated CDKN1A/p21 ubiquitination and degradation. Negatively regulates the canonical NF-kappa-B signaling pathway via stabilization of CACTIN in an ubiquitination-independent manner. This chain is E3 ubiquitin-protein ligase TRIM39 (TRIM39), found in Homo sapiens (Human).